Consider the following 246-residue polypeptide: Bis(5'-nucleosyl)-tetraphosphatase PrpE [asymmetrical] (246 aa).

This sequence belongs to the PrpE family. Ni(2+) is required as a cofactor.

It carries out the reaction P(1),P(4)-bis(5'-guanosyl) tetraphosphate + H2O = GMP + GTP + 2 H(+). Its function is as follows. Asymmetrically hydrolyzes Ap4p to yield AMP and ATP. The sequence is that of Bis(5'-nucleosyl)-tetraphosphatase PrpE [asymmetrical] from Halalkalibacterium halodurans (strain ATCC BAA-125 / DSM 18197 / FERM 7344 / JCM 9153 / C-125) (Bacillus halodurans).